Consider the following 371-residue polypeptide: RxLR effector protein PITG_12731 (371 aa).

A signal peptide spans 1–24 (MRFYSVLLTIVTLIASTYDAKVNA). Residues 43–53 (RMLRADHADER) carry the RxLR-dEER motif.

It belongs to the RxLR effector family.

The protein localises to the secreted. The protein resides in the host nucleus. It localises to the host cytoplasm. Functionally, effector that enhances P.infestans colonization of Nicotiana benthamiana leaves. This is RxLR effector protein PITG_12731 from Phytophthora infestans (strain T30-4) (Potato late blight agent).